Here is a 322-residue protein sequence, read N- to C-terminus: MQTRNTFSWTWIREEITRSISVSLMIYIITWSSISNAYPIFAQQNYENPREATGRIVCANCHLANKPVDIEVPQAVLPDTVFEAVVKIPYDMQLKQVLANGKKGALNVGAVLILPEGFELAPPDRISPEMKEKIGNLSFQNYRPNKKNILVIGPVPGQKYSEITFPILAPDPATNKDVHFLKYPIYVGGNRGRGQIYPDGSKSNNTVYNATAGGIISKILRKEKGVYEITIADASNGRQVIDIIPRGLELLVSEGESIKLDQPLTSNPNVGGFGQGDAEIVLQDPLRVQGLLFFLGSVVLAQIFLVLKKKQFEKVQLSEMNF.

The signal sequence occupies residues 1-35 (MQTRNTFSWTWIREEITRSISVSLMIYIITWSSIS). Tyr-38, Cys-58, Cys-61, and His-62 together coordinate heme. The helical transmembrane segment at 288–308 (VQGLLFFLGSVVLAQIFLVLK) threads the bilayer.

Belongs to the cytochrome f family. In terms of assembly, the 4 large subunits of the cytochrome b6-f complex are cytochrome b6, subunit IV (17 kDa polypeptide, petD), cytochrome f and the Rieske protein, while the 4 small subunits are PetG, PetL, PetM and PetN. The complex functions as a dimer. The cofactor is heme.

The protein resides in the plastid. Its subcellular location is the chloroplast thylakoid membrane. Its function is as follows. Component of the cytochrome b6-f complex, which mediates electron transfer between photosystem II (PSII) and photosystem I (PSI), cyclic electron flow around PSI, and state transitions. This Aethionema grandiflorum (Persian stone-cress) protein is Cytochrome f.